The following is a 290-amino-acid chain: 33 kDa chaperonin (290 aa).

Intrachain disulfides connect cysteine 235–cysteine 237 and cysteine 268–cysteine 271.

Belongs to the HSP33 family. Post-translationally, under oxidizing conditions two disulfide bonds are formed involving the reactive cysteines. Under reducing conditions zinc is bound to the reactive cysteines and the protein is inactive.

The protein localises to the cytoplasm. Redox regulated molecular chaperone. Protects both thermally unfolding and oxidatively damaged proteins from irreversible aggregation. Plays an important role in the bacterial defense system toward oxidative stress. The sequence is that of 33 kDa chaperonin from Streptococcus pyogenes serotype M4 (strain MGAS10750).